A 1840-amino-acid polypeptide reads, in one-letter code: Collagen alpha-1(V) chain (1840 aa).

The first 30 residues, 1–30 (MDVHTRWKAPRPGAPLLSSPLLLLLLLLWA), serve as a signal peptide directing secretion. The Laminin G-like domain maps to 72–244 (DVAYRVSKDA…DYCEHYSPDC (173 aa)). The segment at 231-445 (RAAYDYCEHY…MPANQDTIYE (215 aa)) is nonhelical region. Tyr234, Tyr236, Tyr240, Tyr262, Tyr263, Tyr336, Tyr338, and Tyr344 each carry sulfotyrosine. Disordered regions lie at residues 241–547 (SPDC…QESQ) and 561–1576 (GPAG…EVIQ). A compositionally biased stretch (acidic residues) spans 258-268 (NPDEYYPEGEG). Low complexity-rich tracts occupy residues 335–352 (DYDY…PYED), 375–387 (PTST…SSNP), and 462–471 (IIEPGMLIEG). Residues 446 to 560 (GIGGPRGEKG…ILQQARLALR (115 aa)) are interrupted collagenous region. Positions 472–487 (PPGPEGPAGLPGPPGT) are enriched in pro residues. Composition is skewed to low complexity over residues 508–525 (LPGA…LMLP) and 561–572 (GPAGPMGLTGRP). The interval 561–1572 (GPAGPMGLTG…GLPGPPGPPG (1012 aa)) is triple-helical region. 3 positions are modified to 4-hydroxyproline: Pro572, Pro578, and Pro623. The residue at position 629 (Lys629) is a 5-hydroxylysine. The residue at position 641 (Pro641) is a 4-hydroxyproline. 5-hydroxylysine is present on Lys644. Pro650, Pro656, Pro659, Pro677, and Pro680 each carry 4-hydroxyproline. A compositionally biased stretch (low complexity) spans 673–688 (PRGLPGEPGPRGLLGP). A 3-hydroxyproline mark is found at Pro682 and Pro688. The span at 689–698 (KGPPGPPGPP) shows a compositional bias: pro residues. A 4-hydroxyproline mark is found at Pro692, Pro698, and Pro707. Lys710 is subject to 5-hydroxylysine. 4 positions are modified to 4-hydroxyproline: Pro719, Pro722, Pro728, and Pro734. A compositionally biased stretch (low complexity) spans 724–743 (QQGNPGAQGLPGPQGAIGPP). Residue Lys746 is modified to 5-hydroxylysine. Low complexity predominate over residues 749–758 (LGKPGLPGMP). Pro752, Pro758, Pro764, Pro767, and Pro773 each carry 4-hydroxyproline. Lys776 carries the post-translational modification 5-hydroxylysine. Pro782 and Pro791 each carry 4-hydroxyproline. 5-hydroxylysine is present on residues Lys797, Lys806, Lys809, and Lys812. The residue at position 818 (Pro818) is a 4-hydroxyproline. The residue at position 821 (Lys821) is a 5-hydroxylysine. The residue at position 836 (Pro836) is a 4-hydroxyproline. Residues 839-848 (RGEDGPEGPK) show a composition bias toward basic and acidic residues. Residues Lys848 and Lys866 each carry the 5-hydroxylysine modification. Pro872, Pro875, and Pro878 each carry 4-hydroxyproline. Lys884 is subject to 5-hydroxylysine. Residues Pro890 and Pro893 each carry the 4-hydroxyproline modification. Lys899 is subject to 5-hydroxylysine. Residues Pro905 and Pro908 each carry the 4-hydroxyproline modification. The segment covering 910–919 (PRGQRGPTGP) has biased composition (low complexity). 4-hydroxyproline occurs at positions 932 and 947. 2 stretches are compositionally biased toward low complexity: residues 973 to 992 (KDGL…QGKT) and 1001 to 1013 (VGPQ…TGPM). Pro1019, Pro1022, Pro1025, and Pro1031 each carry 4-hydroxyproline. Low complexity predominate over residues 1090 to 1106 (SPGERGPAGAAGPIGIP). Residues 1108–1117 (RPGPQGPPGP) show a composition bias toward pro residues. Pro1223 and Pro1226 each carry 4-hydroxyproline. Residues 1261 to 1270 (PSGAPGADGP) are compositionally biased toward low complexity. The span at 1296 to 1305 (GLPGEGGPLG) shows a compositional bias: gly residues. 2 stretches are compositionally biased toward pro residues: residues 1382–1400 (TGEP…PGPA) and 1456–1471 (SPGP…PPGL). 4-hydroxyproline is present on residues Pro1469 and Pro1472. Over residues 1487 to 1496 (PGLIGLIGPP) the composition is skewed to low complexity. The segment covering 1528 to 1543 (PLGPPGPPGLPGPPGP) has biased composition (pro residues). Residues 1544 to 1556 (KGAKGSSGPTGPK) are compositionally biased toward low complexity. The segment at 1573–1607 (EVIQPLPIQASRTRRNIDASQLLDDGAGESYVDYA) is nonhelical region. Residues Tyr1603 and Tyr1606 each carry the sulfotyrosine modification. Positions 1611-1839 (EEIFGSLNSL…GFEVGPACFL (229 aa)) constitute a Fibrillar collagen NC1 domain.

Belongs to the fibrillar collagen family. Trimers of two alpha 1(V) and one alpha 2(V) chains in most tissues and trimers of one alpha 1(V), one alpha 2(V), and one alpha 3(V) chains in placenta. Interacts with CSPG4. In terms of processing, prolines at the third position of the tripeptide repeating unit (G-X-Y) are hydroxylated in some or all of the chains. Post-translationally, sulfated on 40% of tyrosines. Hydroxylation on proline residues within the sequence motif, GXPG, is most likely to be 4-hydroxy as this fits the requirement for 4-hydroxylation in vertebrates. A high molecular weight form was detected in Schwann cells and peripheral nerve. A lower, probably processed form, is detected in all other tissues tested (at protein level).

It localises to the secreted. It is found in the extracellular space. The protein resides in the extracellular matrix. Functionally, type V collagen is a member of group I collagen (fibrillar forming collagen). It is a minor connective tissue component of nearly ubiquitous distribution. Type V collagen binds to DNA, heparan sulfate, thrombospondin, heparin, and insulin. The chain is Collagen alpha-1(V) chain (Col5a1) from Rattus norvegicus (Rat).